A 271-amino-acid polypeptide reads, in one-letter code: MNTLEEVDESTHIFNALMSLMRKFLFRVLCVGPIPTNISFIMDGNRRFAKKHNLIGLDAGHRAGFISVKYILQYCKEIGVPYVTLHAFGMDNFKRGPEEVKCVMDLMLEKVELAIDQAVSGNMNGVRIIFAGDLDSLNEHFRAATKKLMELTEENRDLIVVVCVAYSTSLEIVHAVRKSCVRKCTNGDDLVLLELSDVEECMYTSIVPVPDLVIRTGGGDRLSNFMTWQTSRSLLHRTEALWPELGLWHLVWAILKFQRMQDYLTKKKKLD.

The chain crosses the membrane as a helical span at residues 24-41 (FLFRVLCVGPIPTNISFI).

It belongs to the UPP synthase family. It depends on Mg(2+) as a cofactor.

It is found in the endoplasmic reticulum membrane. The protein operates within protein modification; protein glycosylation. Functionally, catalyzes cis-prenyl chain elongation to produce the polyprenyl backbone of dolichol, a glycosyl carrier-lipid required for the biosynthesis of several classes of glycoprotein. The polypeptide is Dehydrodolichyl diphosphate synthase 7 (Arabidopsis thaliana (Mouse-ear cress)).